We begin with the raw amino-acid sequence, 305 residues long: Methionyl-tRNA formyltransferase (305 aa).

111-114 (SLLP) is a (6S)-5,6,7,8-tetrahydrofolate binding site.

It belongs to the Fmt family.

The catalysed reaction is L-methionyl-tRNA(fMet) + (6R)-10-formyltetrahydrofolate = N-formyl-L-methionyl-tRNA(fMet) + (6S)-5,6,7,8-tetrahydrofolate + H(+). Attaches a formyl group to the free amino group of methionyl-tRNA(fMet). The formyl group appears to play a dual role in the initiator identity of N-formylmethionyl-tRNA by promoting its recognition by IF2 and preventing the misappropriation of this tRNA by the elongation apparatus. This Campylobacter jejuni subsp. jejuni serotype O:2 (strain ATCC 700819 / NCTC 11168) protein is Methionyl-tRNA formyltransferase.